We begin with the raw amino-acid sequence, 127 residues long: uncharacterized protein (127 aa).

Residues 1–13 show a composition bias toward polar residues; that stretch reads MEAGNRSGTPQHR. Positions 1–26 are disordered; it reads MEAGNRSGTPQHRQLSEIRQDLSSSP.

This is an uncharacterized protein from Saccharomyces cerevisiae (strain ATCC 204508 / S288c) (Baker's yeast).